A 315-amino-acid polypeptide reads, in one-letter code: Methionyl-tRNA formyltransferase (315 aa).

113-116 (SLLP) provides a ligand contact to (6S)-5,6,7,8-tetrahydrofolate.

It belongs to the Fmt family.

The catalysed reaction is L-methionyl-tRNA(fMet) + (6R)-10-formyltetrahydrofolate = N-formyl-L-methionyl-tRNA(fMet) + (6S)-5,6,7,8-tetrahydrofolate + H(+). Attaches a formyl group to the free amino group of methionyl-tRNA(fMet). The formyl group appears to play a dual role in the initiator identity of N-formylmethionyl-tRNA by promoting its recognition by IF2 and preventing the misappropriation of this tRNA by the elongation apparatus. The polypeptide is Methionyl-tRNA formyltransferase (Shigella dysenteriae serotype 1 (strain Sd197)).